We begin with the raw amino-acid sequence, 322 residues long: Olfactory receptor 11L1 (322 aa).

Residues 1–25 (MEPQNTSTVTNFQLLGFQNLLEWQA) lie on the Extracellular side of the membrane. Asn-5 carries N-linked (GlcNAc...) asparagine glycosylation. The chain crosses the membrane as a helical span at residues 26 to 46 (LLFVIFLLIYCLTIIGNVVII). Topologically, residues 47 to 54 (TVVSQGLR) are cytoplasmic. Residues 55 to 75 (LHSPMYMFLQHLSFLEVWYTS) form a helical membrane-spanning segment. Residues 76 to 99 (TTVPLLLANLLSWGQAISFSACMA) lie on the Extracellular side of the membrane. Cys-97 and Cys-189 form a disulfide bridge. The helical transmembrane segment at 100–120 (QLYFFVFLGATECFLLAFMAY) threads the bilayer. Topologically, residues 121–139 (DRYLAICSPLRYPFLMHRG) are cytoplasmic. Residues 140 to 160 (LCARLVVVSWCTGVSTGFLPS) form a helical membrane-spanning segment. The Extracellular segment spans residues 161-197 (LMISRLDFCGRNQINHFFCDLPPLMQLSCSRVYITEV). Residues 198–217 (TIFILSIAVLCICFFLTLGP) traverse the membrane as a helical segment. The Cytoplasmic portion of the chain corresponds to 218–237 (YVFIVSSILRIPSTSGRRKT). The chain crosses the membrane as a helical span at residues 238-258 (FSTCGSHLAVVTLYYGTMISM). The Extracellular segment spans residues 259–271 (YVCPSPHLLPEIN). The chain crosses the membrane as a helical span at residues 272-292 (KIISVFYTVVTPLLNPVIYSL). Over 293 to 322 (RNKDFKEAVRKVMRRKCGILWSTSKRKFLY) the chain is Cytoplasmic.

Belongs to the G-protein coupled receptor 1 family.

The protein localises to the cell membrane. In terms of biological role, odorant receptor. The polypeptide is Olfactory receptor 11L1 (OR11L1) (Homo sapiens (Human)).